The primary structure comprises 179 residues: Putative endogenous retrovirus group FC1 Env polyprotein (179 aa).

Residues 1–22 (MARPSPLCLLLLLTLLPPIVPS) form the signal peptide. The segment at 23 to 179 (NSLLTEPPFR…SKLRIFRTYV (157 aa)) is truncated surface protein. A glycan (N-linked (GlcNAc...) asparagine) is linked at N69.

This sequence belongs to the gamma type-C retroviral envelope protein family. HERV class-I F(c)1 env subfamily.

The protein resides in the virion. Retroviral envelope proteins mediate receptor recognition and membrane fusion during early infection. Endogenous envelope proteins may have kept, lost or modified their original function during evolution. This chain is Putative endogenous retrovirus group FC1 Env polyprotein (ERVFC1), found in Gorilla gorilla gorilla (Western lowland gorilla).